Here is a 490-residue protein sequence, read N- to C-terminus: Betaine aldehyde dehydrogenase (490 aa).

Positions 26, 27, and 93 each coordinate K(+). Position 150–152 (150–152 (GAW)) interacts with NAD(+). Residue Lys-162 is the Charge relay system of the active site. An NAD(+)-binding site is contributed by 176–179 (KPSE). Val-180 contacts K(+). 230-233 (GVAS) contacts NAD(+). A K(+)-binding site is contributed by Leu-246. Glu-252 serves as the catalytic Proton acceptor. NAD(+)-binding residues include Gly-254, Cys-286, and Glu-387. Cys-286 acts as the Nucleophile in catalysis. Cys-286 carries the post-translational modification Cysteine sulfenic acid (-SOH). Residues Lys-457 and Gly-460 each coordinate K(+). Glu-464 serves as the catalytic Charge relay system.

This sequence belongs to the aldehyde dehydrogenase family. As to quaternary structure, dimer of dimers. Requires K(+) as cofactor.

It carries out the reaction betaine aldehyde + NAD(+) + H2O = glycine betaine + NADH + 2 H(+). Its pathway is amine and polyamine biosynthesis; betaine biosynthesis via choline pathway; betaine from betaine aldehyde: step 1/1. Involved in the biosynthesis of the osmoprotectant glycine betaine. Catalyzes the irreversible oxidation of betaine aldehyde to the corresponding acid. This is Betaine aldehyde dehydrogenase from Escherichia coli (strain ATCC 8739 / DSM 1576 / NBRC 3972 / NCIMB 8545 / WDCM 00012 / Crooks).